A 799-amino-acid polypeptide reads, in one-letter code: Lon protease 4 (799 aa).

A Lon N-terminal domain is found at 15 to 204 (FPLLPLRTGV…RVAGLLAEAS (190 aa)). 356–363 (GPPGVGKT) is an ATP binding site. Residues 595 to 776 (TSVAGVATGL…SQVIAAALEE (182 aa)) enclose the Lon proteolytic domain. Catalysis depends on residues Ser682 and Lys725.

It belongs to the peptidase S16 family. Homohexamer. Organized in a ring with a central cavity.

The protein localises to the cytoplasm. It carries out the reaction Hydrolysis of proteins in presence of ATP.. Functionally, ATP-dependent serine protease that mediates the selective degradation of mutant and abnormal proteins as well as certain short-lived regulatory proteins. Required for cellular homeostasis and for survival from DNA damage and developmental changes induced by stress. Degrades polypeptides processively to yield small peptide fragments that are 5 to 10 amino acids long. Binds to DNA in a double-stranded, site-specific manner. In Sorangium cellulosum (strain So ce56) (Polyangium cellulosum (strain So ce56)), this protein is Lon protease 4.